A 550-amino-acid polypeptide reads, in one-letter code: CTP synthase (550 aa).

The interval 1 to 271 (MTRYIFITGG…DAEVLDVFGM (271 aa)) is amidoligase domain. Ser-13 provides a ligand contact to CTP. Residue Ser-13 coordinates UTP. 14-19 (SLGKGL) is a binding site for ATP. Tyr-54 contacts L-glutamine. Asp-71 serves as a coordination point for ATP. Mg(2+) contacts are provided by Asp-71 and Glu-145. CTP-binding positions include 152–154 (DIE), 192–197 (KTKPTQ), and Lys-228. UTP contacts are provided by residues 192 to 197 (KTKPTQ) and Lys-228. Positions 297 to 549 (TIAVVGKYTV…IAAAKEHGRL (253 aa)) constitute a Glutamine amidotransferase type-1 domain. Gly-361 is a binding site for L-glutamine. Cys-388 (nucleophile; for glutamine hydrolysis) is an active-site residue. Residues 389 to 392 (FGMQ), Glu-412, and Arg-477 each bind L-glutamine. Residues His-522 and Glu-524 contribute to the active site.

This sequence belongs to the CTP synthase family. Homotetramer.

It carries out the reaction UTP + L-glutamine + ATP + H2O = CTP + L-glutamate + ADP + phosphate + 2 H(+). It catalyses the reaction L-glutamine + H2O = L-glutamate + NH4(+). The catalysed reaction is UTP + NH4(+) + ATP = CTP + ADP + phosphate + 2 H(+). The protein operates within pyrimidine metabolism; CTP biosynthesis via de novo pathway; CTP from UDP: step 2/2. Allosterically activated by GTP, when glutamine is the substrate; GTP has no effect on the reaction when ammonia is the substrate. The allosteric effector GTP functions by stabilizing the protein conformation that binds the tetrahedral intermediate(s) formed during glutamine hydrolysis. Inhibited by the product CTP, via allosteric rather than competitive inhibition. In terms of biological role, catalyzes the ATP-dependent amination of UTP to CTP with either L-glutamine or ammonia as the source of nitrogen. Regulates intracellular CTP levels through interactions with the four ribonucleotide triphosphates. This chain is CTP synthase, found in Caulobacter vibrioides (strain ATCC 19089 / CIP 103742 / CB 15) (Caulobacter crescentus).